We begin with the raw amino-acid sequence, 607 residues long: Cyclic-di-GMP receptor FimW (607 aa).

The segment at 323–492 is pilZ-like domain; sequence ERTFQRTQGQ…GGTQMGIEMI (170 aa). The RXXXR motif motif lies at 324–328; it reads RTFQR. Residues 435–440 carry the D/NXSXXG motif motif; that stretch reads NHSPGG. Polar residues predominate over residues 568–582; the sequence is SQFEYRSAEPVNTPS. Residues 568–607 are disordered; it reads SQFEYRSAEPVNTPSDKPVTAPVARPPAGEEDFDSLWKSL.

As to quaternary structure, monomer in the absence of c-di-GMP. Forms dimers in the presence of c-di-GMP.

It localises to the cytoplasm. High-affinity cyclic-di-GMP binding protein that regulates type IV pili (T4P) elongation. Required for T4P-mediated surface attachment and walking motility during the early phases of surface colonization. Not required for twitching motility. Does not bind related nucleotides such as GMP, GDP, GTP or ATP. This Pseudomonas aeruginosa (strain ATCC 15692 / DSM 22644 / CIP 104116 / JCM 14847 / LMG 12228 / 1C / PRS 101 / PAO1) protein is Cyclic-di-GMP receptor FimW.